The chain runs to 680 residues: Probable potassium transport system protein Kup (680 aa).

The next 12 helical transmembrane spans lie at 16-36 (IAGMLITMGVVYGDIGTSPLY), 60-80 (ISLVFWTLMLMTTVKYVLIAL), 103-123 (WLVIPAIIGGATLLADGMLTP), 150-170 (EVIILTVTILSVLFFIQKFGT), 177-197 (FGPIMLIWFTFIGAIGVMNLM), 222-242 (VGILILGSVFLATTGAEALYS), 255-275 (SWPYIAACLVLNYFGQGVWLL), 302-322 (IPAILLATVAAIIASQALISG), 351-371 (LYISIVNWILWAVCLAVVFYF), 380-400 (AYGLAITITMLMTTILLFHYL), 407-427 (WFLAYVVLLFFGAIETIFFIA), and 432-452 (FMHGGYVTVLIAFVILFIMFV).

Belongs to the HAK/KUP transporter (TC 2.A.72) family.

It is found in the cell membrane. It catalyses the reaction K(+)(in) + H(+)(in) = K(+)(out) + H(+)(out). Transport of potassium into the cell. Likely operates as a K(+):H(+) symporter. The chain is Probable potassium transport system protein Kup from Latilactobacillus sakei subsp. sakei (strain 23K) (Lactobacillus sakei subsp. sakei).